A 459-amino-acid polypeptide reads, in one-letter code: Peptidyl-prolyl cis-trans isomerase FKBP4 (459 aa).

At Met-1 the chain carries N-acetylmethionine; in peptidyl-prolyl cis-trans isomerase FKBP4; alternate. A disordered region spans residues 1–24 (MTAEEMKATESGAQSAPLPMEGVD). Thr-2 carries the N-acetylthreonine; in peptidyl-prolyl cis-trans isomerase FKBP4, N-terminally processed; partial modification. The 89-residue stretch at 50-138 (GDRVFVHYTG…VFEVELFEFK (89 aa)) folds into the PPIase FKBP-type 1 domain. A Phosphothreonine; by CK2 modification is found at Thr-143. In terms of domain architecture, PPIase FKBP-type 2 spans 167–253 (GAIVEVALEG…KYELHLKSFE (87 aa)). A Phosphotyrosine modification is found at Tyr-220. Positions 267-400 (LEQSTIVKER…TQLAVCQQRI (134 aa)) are interaction with tubulin. 3 TPR repeats span residues 270–303 (STIVKERGTVYFKEGKYKQALLQYKKIVSWLEYE), 319–352 (LASHLNLAMCHLKLQAFSAAIESCNKALELDSNN), and 353–386 (EKGLFRRGEAHLAVNDFELARADFQKVLQLYPNN). Lys-282 is modified (N6-acetyllysine). Position 373 is an omega-N-methylarginine (Arg-373). Residues 421–459 (EENKAKAEASSGDHPTDTEMKEEQKSNTAGSQSQVETEA) are disordered. The segment covering 434-445 (HPTDTEMKEEQK) has biased composition (basic and acidic residues). At Thr-436 the chain carries Phosphothreonine. Lys-441 participates in a covalent cross-link: Glycyl lysine isopeptide (Lys-Gly) (interchain with G-Cter in SUMO1). Polar residues predominate over residues 446–459 (SNTAGSQSQVETEA). 2 positions are modified to phosphoserine: Ser-451 and Ser-453.

Homodimer. Interacts with GLMN. Associates with HSP90AA1 and HSP70 in steroid hormone receptor complexes. Also interacts with peroxisomal phytanoyl-CoA alpha-hydroxylase (PHYH). Interacts with NR3C1 and dynein. Interacts with HSF1 in the HSP90 complex. Associates with tubulin. Interacts with MAPT/TAU. Interacts (via TPR domain) with S100A1, S100A2 and S100A6; the interaction is Ca(2+) dependent. Interaction with S100A1 and S100A2 (but not with S100A6) leads to inhibition of FKBP4-HSP90 interaction. Interacts with dynein; causes partially NR3C1 transport to the nucleus. Post-translationally, phosphorylation by CK2 results in loss of HSP90 binding activity. Widely expressed.

The protein resides in the cytoplasm. The protein localises to the cytosol. Its subcellular location is the mitochondrion. It localises to the nucleus. It is found in the cytoskeleton. The protein resides in the cell projection. The protein localises to the axon. The enzyme catalyses [protein]-peptidylproline (omega=180) = [protein]-peptidylproline (omega=0). Inhibited by FK506. Its function is as follows. Immunophilin protein with PPIase and co-chaperone activities. Component of steroid receptors heterocomplexes through interaction with heat-shock protein 90 (HSP90). May play a role in the intracellular trafficking of heterooligomeric forms of steroid hormone receptors between cytoplasm and nuclear compartments. The isomerase activity controls neuronal growth cones via regulation of TRPC1 channel opening. Also acts as a regulator of microtubule dynamics by inhibiting MAPT/TAU ability to promote microtubule assembly. May have a protective role against oxidative stress in mitochondria. This chain is Peptidyl-prolyl cis-trans isomerase FKBP4 (FKBP4), found in Homo sapiens (Human).